Here is a 251-residue protein sequence, read N- to C-terminus: Imidazole glycerol phosphate synthase subunit HisF (251 aa).

Residues Asp11 and Asp130 contribute to the active site.

Belongs to the HisA/HisF family. In terms of assembly, heterodimer of HisH and HisF.

Its subcellular location is the cytoplasm. It catalyses the reaction 5-[(5-phospho-1-deoxy-D-ribulos-1-ylimino)methylamino]-1-(5-phospho-beta-D-ribosyl)imidazole-4-carboxamide + L-glutamine = D-erythro-1-(imidazol-4-yl)glycerol 3-phosphate + 5-amino-1-(5-phospho-beta-D-ribosyl)imidazole-4-carboxamide + L-glutamate + H(+). The protein operates within amino-acid biosynthesis; L-histidine biosynthesis; L-histidine from 5-phospho-alpha-D-ribose 1-diphosphate: step 5/9. In terms of biological role, IGPS catalyzes the conversion of PRFAR and glutamine to IGP, AICAR and glutamate. The HisF subunit catalyzes the cyclization activity that produces IGP and AICAR from PRFAR using the ammonia provided by the HisH subunit. The sequence is that of Imidazole glycerol phosphate synthase subunit HisF from Metallosphaera sedula (strain ATCC 51363 / DSM 5348 / JCM 9185 / NBRC 15509 / TH2).